The following is a 151-amino-acid chain: Small ribosomal subunit protein uS15 (151 aa).

Belongs to the universal ribosomal protein uS15 family.

The chain is Small ribosomal subunit protein uS15 (RPS13) from Lumbricus rubellus (Humus earthworm).